Here is a 215-residue protein sequence, read N- to C-terminus: Adenylate kinase (215 aa).

ATP is bound at residue 10-15; the sequence is GAGKGT. Residues 30-59 are NMP; it reads STGDMLRAAVKAGSPLGLKVKGVMDSGGLV. Residues T31, R36, 57-59, 85-88, and Q92 each bind AMP; these read GLV and GFPR. An LID region spans residues 122 to 159; it reads GRRVHAASGRVYHDLHNPPKVAGKDDETGEDLIQREDD. Residues R123 and 132–133 each bind ATP; that span reads VY. 2 residues coordinate AMP: R156 and R167. G201 serves as a coordination point for ATP.

This sequence belongs to the adenylate kinase family. As to quaternary structure, monomer.

The protein localises to the cytoplasm. The catalysed reaction is AMP + ATP = 2 ADP. It participates in purine metabolism; AMP biosynthesis via salvage pathway; AMP from ADP: step 1/1. Functionally, catalyzes the reversible transfer of the terminal phosphate group between ATP and AMP. Plays an important role in cellular energy homeostasis and in adenine nucleotide metabolism. The protein is Adenylate kinase of Azotobacter vinelandii (strain DJ / ATCC BAA-1303).